A 649-amino-acid chain; its full sequence is MVSAQVATELGQPIPLDTQHAVSVCFPTWKSVISYVEKDPKVLGCLKSGYPRFWIHPSIQKLRDILIEKYAKENETCFCFPSYRVAKRCREYVRRKCAHRNGKVRILQLATAKPINEEQKTWKRECKIAVVFVDGAYENILKQYWQYTGEIISSRLAEYVLHELFMVEKKSSPAEEKEYIEMRYGRNLNFAFADRAKELIKKRIATKVIDKDEHDEEENYHFLAGNQDEQDFQDTFLDSSLNEANHGEDHDGGISGEVDSQEEPHNGLVSTIPPEPIEMSTIEEEQSVEEDAGRCALRVCPERDVFLFPSGMASIFTAHRLLLQWDSLRLNRSRNGSDVTSSPPNKKTVIFGFPYADTLHVLQEFNETYFLGEGDESSMKELTKILHSGEQILAVFIETPSNPLLKMGNLLELKRLSELFGFFIIIDETVGGIVNIDGLPFADIVCSSLTKTFSGDSNVIGGSMVLNPQSRVYEFASRFMQLEDEYEDLLWCEDAIYLERNSRDFIARTIRINYSTEYLLDKILKPHVGENKLFKKIYYPNLTSKETLTNYDMVRCKKEGGYGGLFSLTFHDEDHAAAFYDNLKLNKGPSLGTNFTLAFPYTLMTYYHELDMAEKFGVERNLLRISVGLESQSILGKIFQEAIDKTVEI.

The interval 242 to 273 is disordered; that stretch reads NEANHGEDHDGGISGEVDSQEEPHNGLVSTIP. A Phosphoserine modification is found at serine 287. N6-(pyridoxal phosphate)lysine is present on lysine 451.

This sequence belongs to the trans-sulfuration enzymes family. MET7 subfamily. The cofactor is pyridoxal 5'-phosphate.

It carries out the reaction O-succinyl-L-homoserine + L-cysteine = L,L-cystathionine + succinate + H(+). It participates in amino-acid biosynthesis; L-methionine biosynthesis via de novo pathway; L-cystathionine from O-succinyl-L-homoserine: step 1/1. Functionally, catalyzes the formation of L-cystathionine from O-succinyl-L-homoserine (OSHS) and L-cysteine, via a gamma-replacement reaction. In the absence of thiol, catalyzes gamma-elimination to form 2-oxobutanoate, succinate and ammonia. The sequence is that of Putative cystathionine gamma-synthase YML082W from Saccharomyces cerevisiae (strain ATCC 204508 / S288c) (Baker's yeast).